The primary structure comprises 361 residues: Queuine tRNA-ribosyltransferase (361 aa).

Residue Asp-92 is the Proton acceptor of the active site. Substrate is bound by residues 92–96 (DSGGF), Asp-146, Gln-189, and Gly-216. The tract at residues 247–253 (GVGKPAD) is RNA binding. The active-site Nucleophile is Asp-266. An RNA binding; important for wobble base 34 recognition region spans residues 271–275 (TRSGR). Residues Cys-304, Cys-306, Cys-309, and His-335 each contribute to the Zn(2+) site.

Belongs to the queuine tRNA-ribosyltransferase family. Homodimer. Within each dimer, one monomer is responsible for RNA recognition and catalysis, while the other monomer binds to the replacement base PreQ1. The cofactor is Zn(2+).

The catalysed reaction is 7-aminomethyl-7-carbaguanine + guanosine(34) in tRNA = 7-aminomethyl-7-carbaguanosine(34) in tRNA + guanine. It functions in the pathway tRNA modification; tRNA-queuosine biosynthesis. Catalyzes the base-exchange of a guanine (G) residue with the queuine precursor 7-aminomethyl-7-deazaguanine (PreQ1) at position 34 (anticodon wobble position) in tRNAs with GU(N) anticodons (tRNA-Asp, -Asn, -His and -Tyr). Catalysis occurs through a double-displacement mechanism. The nucleophile active site attacks the C1' of nucleotide 34 to detach the guanine base from the RNA, forming a covalent enzyme-RNA intermediate. The proton acceptor active site deprotonates the incoming PreQ1, allowing a nucleophilic attack on the C1' of the ribose to form the product. After dissociation, two additional enzymatic reactions on the tRNA convert PreQ1 to queuine (Q), resulting in the hypermodified nucleoside queuosine (7-(((4,5-cis-dihydroxy-2-cyclopenten-1-yl)amino)methyl)-7-deazaguanosine). The polypeptide is Queuine tRNA-ribosyltransferase (Rickettsia rickettsii (strain Iowa)).